A 125-amino-acid polypeptide reads, in one-letter code: MIEQPRICVQVHSIYVETQSIPEEERFVFAYTVTVRNLGRSNVQLLGRYWLITNSNGRQTEVQGEGVIGEQPLILPGNEFQYTSGAVLETPLGTMEGHYEMIDHLGQAFRTVIPVFRLAIPALIH.

Residues 1-125 (MIEQPRICVQ…FRLAIPALIH (125 aa)) form the ApaG domain.

This is Protein ApaG from Yersinia pestis bv. Antiqua (strain Antiqua).